The following is a 625-amino-acid chain: Very-long-chain aldehyde decarbonylase CER1 (625 aa).

Transmembrane regions (helical) follow at residues 45 to 65 (LGYF…QVWI), 126 to 146 (GVLM…YWLH), 177 to 197 (PFAE…TTLL), 200 to 220 (TASI…NNMG), and 329 to 349 (LLWP…RLFV). The region spanning 138–272 (VEFLYYWLHK…MPLYDYIYGT (135 aa)) is the Fatty acid hydroxylase domain.

It belongs to the sterol desaturase family. In terms of assembly, homodimer. Interacts with CER3, CYTB5-B, CYTB5-C, CYTB5-D and CYTB5-E. As to expression, expressed in seedlings, stems, leaves, flowers, fruits and siliques. Not detected in roots, pollen and seeds. Expressed in trichomes, cotyledons, shoot apical meristem and leaf primordia. Preferentially associated with young leaves rather than mature leaves. Expressed in the epidermis of the stem and caulines leaves, in the carpels and the sepals.

The protein resides in the endoplasmic reticulum membrane. The enzyme catalyses a long-chain fatty aldehyde + 2 NADPH + O2 + H(+) = a long-chain alkane + formate + 2 NADP(+) + H2O. In terms of biological role, aldehyde decarbonylase involved in the conversion of aldehydes to alkanes. Core component of a very-long-chain alkane synthesis complex. Involved in epicuticular wax biosynthesis and pollen fertility. The polypeptide is Very-long-chain aldehyde decarbonylase CER1 (CER1) (Arabidopsis thaliana (Mouse-ear cress)).